Reading from the N-terminus, the 303-residue chain is MNPQELKSILSHGLLSFPVTDFNAQGDFNPAGYIKRLEWLAPYGASALFAAGGTGEFFSLAASEYSQVIKTAVDTCATSVPILAGVGGSTRQAIEYAQEAERLGAKGLLLLPHYLTEASQDGVAAHVEAVCKSVNIGVVVYNRNVCRLNADLLEKLAERCPNLIGYKDGLGDIELMVSIRRRLGERFSYLGGLPTAEVYAAAYKALGVPVYSSAVFNFVPKTAMDFYNAIARDDHAAVAKLIDDFFLPYLDIRNRKAGYAVSIVKAGARIAGYDAGPVRTPLTDLTAEEYEMLAALMDKMGPQ.

Belongs to the DapA family.

The enzyme catalyses 5-dehydro-4-deoxy-D-glucarate + H(+) = 2,5-dioxopentanoate + CO2 + H2O. It functions in the pathway carbohydrate acid metabolism; D-glucarate degradation; 2,5-dioxopentanoate from D-glucarate: step 2/2. The protein is Probable 5-dehydro-4-deoxyglucarate dehydratase of Pseudomonas putida (strain ATCC 700007 / DSM 6899 / JCM 31910 / BCRC 17059 / LMG 24140 / F1).